A 184-amino-acid polypeptide reads, in one-letter code: ATP synthase subunit b, chloroplastic (184 aa).

The chain crosses the membrane as a helical span at residues 26-48; it reads ILATNLINLSVVLGVLIFFGKGV.

It belongs to the ATPase B chain family. As to quaternary structure, F-type ATPases have 2 components, F(1) - the catalytic core - and F(0) - the membrane proton channel. F(1) has five subunits: alpha(3), beta(3), gamma(1), delta(1), epsilon(1). F(0) has four main subunits: a(1), b(1), b'(1) and c(10-14). The alpha and beta chains form an alternating ring which encloses part of the gamma chain. F(1) is attached to F(0) by a central stalk formed by the gamma and epsilon chains, while a peripheral stalk is formed by the delta, b and b' chains.

It localises to the plastid. The protein resides in the chloroplast thylakoid membrane. Functionally, f(1)F(0) ATP synthase produces ATP from ADP in the presence of a proton or sodium gradient. F-type ATPases consist of two structural domains, F(1) containing the extramembraneous catalytic core and F(0) containing the membrane proton channel, linked together by a central stalk and a peripheral stalk. During catalysis, ATP synthesis in the catalytic domain of F(1) is coupled via a rotary mechanism of the central stalk subunits to proton translocation. Its function is as follows. Component of the F(0) channel, it forms part of the peripheral stalk, linking F(1) to F(0). The protein is ATP synthase subunit b, chloroplastic of Acorus calamus (Sweet flag).